Reading from the N-terminus, the 149-residue chain is Transcriptional repressor NrdR (149 aa).

A zinc finger spans residues 3 to 34; it reads CPFCSAVDTKVIDSRLVGEGTQVRRRRQCVIC. An ATP-cone domain is found at 49–139; sequence PRVIKSNDVR…VYRSFEDIRE (91 aa).

It belongs to the NrdR family. Zn(2+) serves as cofactor.

Functionally, negatively regulates transcription of bacterial ribonucleotide reductase nrd genes and operons by binding to NrdR-boxes. This chain is Transcriptional repressor NrdR, found in Sodalis glossinidius (strain morsitans).